Consider the following 495-residue polypeptide: UDP-N-acetylmuramoyl-L-alanyl-D-glutamate--2,6-diaminopimelate ligase (495 aa).

2 residues coordinate UDP-N-acetyl-alpha-D-muramoyl-L-alanyl-D-glutamate: leucine 32 and serine 34. 119 to 125 (GTNGKTT) contributes to the ATP binding site. Residues asparagine 160, 161–162 (TT), serine 188, glutamine 194, and arginine 196 contribute to the UDP-N-acetyl-alpha-D-muramoyl-L-alanyl-D-glutamate site. Lysine 228 bears the N6-carboxylysine mark. Meso-2,6-diaminopimelate is bound by residues arginine 390, 414–417 (DNPR), glycine 465, and glutamate 469. Residues 414-417 (DNPR) carry the Meso-diaminopimelate recognition motif motif.

It belongs to the MurCDEF family. MurE subfamily. Mg(2+) is required as a cofactor. In terms of processing, carboxylation is probably crucial for Mg(2+) binding and, consequently, for the gamma-phosphate positioning of ATP.

Its subcellular location is the cytoplasm. It carries out the reaction UDP-N-acetyl-alpha-D-muramoyl-L-alanyl-D-glutamate + meso-2,6-diaminopimelate + ATP = UDP-N-acetyl-alpha-D-muramoyl-L-alanyl-gamma-D-glutamyl-meso-2,6-diaminopimelate + ADP + phosphate + H(+). The protein operates within cell wall biogenesis; peptidoglycan biosynthesis. Its function is as follows. Catalyzes the addition of meso-diaminopimelic acid to the nucleotide precursor UDP-N-acetylmuramoyl-L-alanyl-D-glutamate (UMAG) in the biosynthesis of bacterial cell-wall peptidoglycan. This Vibrio cholerae serotype O1 (strain ATCC 39315 / El Tor Inaba N16961) protein is UDP-N-acetylmuramoyl-L-alanyl-D-glutamate--2,6-diaminopimelate ligase.